The primary structure comprises 513 residues: Sugar transport protein MST8 (513 aa).

Residues 1–17 (MAGGAMTDTDGAHKNYP) are Cytoplasmic-facing. The helical transmembrane segment at 18–38 (GKMTIFVFLACLVASSGGLIF) threads the bilayer. Residues 39–81 (GYDIGISGGVTSMDSFLIKFFPSVYAKEKEMVETNQYCKFDSE) are Extracellular-facing. Residues 82-102 (LLTLFTSSLYLAALIASLFAS) form a helical membrane-spanning segment. Over 103 to 116 (VITRKFGRRITMLG) the chain is Cytoplasmic. A helical transmembrane segment spans residues 117-137 (GGVIFLVGAILNGAAADVAML). The Extracellular portion of the chain corresponds to 138–139 (II). The chain crosses the membrane as a helical span at residues 140-160 (GRILLGIGVGFSNQAVPLYLS). Topologically, residues 161 to 166 (EMAPAR) are cytoplasmic. Residues 167–187 (MRGMLNISFQLMITVGILAAN) traverse the membrane as a helical segment. Over 188 to 201 (LINYFTDKIAGGWG) the chain is Extracellular. The helical transmembrane segment at 202-222 (WRVSLGLAAVPAVIMAGGSLF) threads the bilayer. The Cytoplasmic segment spans residues 223–294 (LPDTPNSLLS…LVMSVLIPTL (72 aa)). A helical membrane pass occupies residues 295–315 (QQLTGINVVMFYAPVLFKTIG). At 316 to 320 (FGGTA) the chain is on the extracellular side. Residues 321–341 (SLMSAVITGLVNMFATFVSIA) traverse the membrane as a helical segment. Over 342-347 (TVDRLG) the chain is Cytoplasmic. The helical transmembrane segment at 348-368 (RRKLLLQGGVQMIFAQFILGT) threads the bilayer. The Extracellular segment spans residues 369–385 (LIAVKFGTAGVANISRG). The helical transmembrane segment at 386 to 406 (YAIVVVLCICVFVSAFAWSWG) threads the bilayer. Topologically, residues 407–425 (PLGWLVPSEIFPLEIRSAA) are cytoplasmic. The helical transmembrane segment at 426–446 (QSVVVVFNMAFTFIIAQIFLM) threads the bilayer. Over 447–450 (MLCH) the chain is Extracellular. The helical transmembrane segment at 451-471 (LKFGLFYFFGAMELIMTGFVF) threads the bilayer. Residues 472 to 512 (FFLPETKGIPIEEMDRIWGKHWYWRRFVGAGAGGKVEITST) are Cytoplasmic-facing.

Belongs to the major facilitator superfamily. Sugar transporter (TC 2.A.1.1) family. In terms of tissue distribution, expressed specifically in anthers.

The protein resides in the membrane. Functionally, mediates active uptake of hexoses by sugar:proton symport. May play an important role in transporting monosaccharides during anther development. This chain is Sugar transport protein MST8, found in Oryza sativa subsp. japonica (Rice).